A 363-amino-acid chain; its full sequence is D-alanine--D-alanine ligase (363 aa).

An ATP-grasp domain is found at 146–352 (KLCAADAGVA…FTALIDKLLH (207 aa)). 179–234 (DSTFGYPLFVKPASLGSSVGISKVHLPAALPEALKVACSYDRKILVEAAVSGKEIE) is a binding site for ATP. Positions 305, 319, and 321 each coordinate Mg(2+).

It belongs to the D-alanine--D-alanine ligase family. Mg(2+) serves as cofactor. It depends on Mn(2+) as a cofactor.

The protein localises to the cytoplasm. The enzyme catalyses 2 D-alanine + ATP = D-alanyl-D-alanine + ADP + phosphate + H(+). It functions in the pathway cell wall biogenesis; peptidoglycan biosynthesis. In terms of biological role, cell wall formation. The polypeptide is D-alanine--D-alanine ligase (Chlorobium limicola (strain DSM 245 / NBRC 103803 / 6330)).